Here is a 398-residue protein sequence, read N- to C-terminus: Tyrosine--tRNA ligase (398 aa).

Residues 48 to 57 (PTGADIHLGH) carry the 'HIGH' region motif. The short motif at 235 to 239 (KMSKS) is the 'KMSKS' region element. K238 contacts ATP. Positions 334–398 (VKLAYLLGAT…GKNKFMRLVP (65 aa)) constitute an S4 RNA-binding domain.

It belongs to the class-I aminoacyl-tRNA synthetase family. TyrS type 2 subfamily. Homodimer.

The protein resides in the cytoplasm. It carries out the reaction tRNA(Tyr) + L-tyrosine + ATP = L-tyrosyl-tRNA(Tyr) + AMP + diphosphate + H(+). Catalyzes the attachment of tyrosine to tRNA(Tyr) in a two-step reaction: tyrosine is first activated by ATP to form Tyr-AMP and then transferred to the acceptor end of tRNA(Tyr). The protein is Tyrosine--tRNA ligase of Nostoc sp. (strain PCC 7120 / SAG 25.82 / UTEX 2576).